Consider the following 225-residue polypeptide: tRNA (guanine-N(1)-)-methyltransferase (225 aa).

S-adenosyl-L-methionine is bound by residues G112 and 132-137 (IGDYVL).

The protein belongs to the RNA methyltransferase TrmD family. Homodimer.

The protein resides in the cytoplasm. It carries out the reaction guanosine(37) in tRNA + S-adenosyl-L-methionine = N(1)-methylguanosine(37) in tRNA + S-adenosyl-L-homocysteine + H(+). Functionally, specifically methylates guanosine-37 in various tRNAs. The polypeptide is tRNA (guanine-N(1)-)-methyltransferase (Porphyromonas gingivalis (strain ATCC 33277 / DSM 20709 / CIP 103683 / JCM 12257 / NCTC 11834 / 2561)).